The sequence spans 248 residues: 4-hydroxy-tetrahydrodipicolinate reductase (248 aa).

Residues 8 to 13 (GAKGRV), D34, 76 to 78 (GTT), and 103 to 106 (APNF) contribute to the NAD(+) site. Catalysis depends on H133, which acts as the Proton donor/acceptor. H134 provides a ligand contact to (S)-2,3,4,5-tetrahydrodipicolinate. Catalysis depends on K137, which acts as the Proton donor. 143-144 (GT) is a (S)-2,3,4,5-tetrahydrodipicolinate binding site.

The protein belongs to the DapB family.

Its subcellular location is the cytoplasm. The catalysed reaction is (S)-2,3,4,5-tetrahydrodipicolinate + NAD(+) + H2O = (2S,4S)-4-hydroxy-2,3,4,5-tetrahydrodipicolinate + NADH + H(+). It catalyses the reaction (S)-2,3,4,5-tetrahydrodipicolinate + NADP(+) + H2O = (2S,4S)-4-hydroxy-2,3,4,5-tetrahydrodipicolinate + NADPH + H(+). It participates in amino-acid biosynthesis; L-lysine biosynthesis via DAP pathway; (S)-tetrahydrodipicolinate from L-aspartate: step 4/4. Its function is as follows. Catalyzes the conversion of 4-hydroxy-tetrahydrodipicolinate (HTPA) to tetrahydrodipicolinate. This is 4-hydroxy-tetrahydrodipicolinate reductase from Corynebacterium urealyticum (strain ATCC 43042 / DSM 7109).